A 568-amino-acid chain; its full sequence is Sulfite reductase [NADPH] hemoprotein beta-component (568 aa).

The [4Fe-4S] cluster site is built by cysteine 425, cysteine 431, cysteine 470, and cysteine 474. Position 474 (cysteine 474) interacts with siroheme.

The protein belongs to the nitrite and sulfite reductase 4Fe-4S domain family. In terms of assembly, alpha(8)-beta(8). The alpha component is a flavoprotein, the beta component is a hemoprotein. The cofactor is siroheme. Requires [4Fe-4S] cluster as cofactor.

The catalysed reaction is hydrogen sulfide + 3 NADP(+) + 3 H2O = sulfite + 3 NADPH + 4 H(+). It participates in sulfur metabolism; hydrogen sulfide biosynthesis; hydrogen sulfide from sulfite (NADPH route): step 1/1. Its function is as follows. Component of the sulfite reductase complex that catalyzes the 6-electron reduction of sulfite to sulfide. This is one of several activities required for the biosynthesis of L-cysteine from sulfate. The chain is Sulfite reductase [NADPH] hemoprotein beta-component from Xanthomonas campestris pv. campestris (strain B100).